A 182-amino-acid polypeptide reads, in one-letter code: uncharacterized protein (182 aa).

2 helical membrane-spanning segments follow: residues 76-96 (LLLAMSTLKICPLNLVFLALA) and 114-130 (LDLLFVSLTTTACLIGA).

It localises to the membrane. This is an uncharacterized protein from Saccharomyces cerevisiae (strain ATCC 204508 / S288c) (Baker's yeast).